We begin with the raw amino-acid sequence, 66 residues long: Large ribosomal subunit protein bL31 (66 aa).

Zn(2+) contacts are provided by cysteine 16, cysteine 18, cysteine 36, and cysteine 39.

This sequence belongs to the bacterial ribosomal protein bL31 family. Type A subfamily. In terms of assembly, part of the 50S ribosomal subunit. The cofactor is Zn(2+).

Functionally, binds the 23S rRNA. This chain is Large ribosomal subunit protein bL31, found in Thermodesulfovibrio yellowstonii (strain ATCC 51303 / DSM 11347 / YP87).